The sequence spans 99 residues: Large ribosomal subunit protein bL27 (99 aa).

Positions alanine 13 to glycine 65 are disordered.

It belongs to the bacterial ribosomal protein bL27 family.

The chain is Large ribosomal subunit protein bL27 from Lactobacillus delbrueckii subsp. bulgaricus (strain ATCC BAA-365 / Lb-18).